We begin with the raw amino-acid sequence, 201 residues long: Large ribosomal subunit protein uL4 (201 aa).

A disordered region spans residues 43 to 73; the sequence is SRGQKTRAEVTGSGKKPWRQKGTGRARSGSV.

Belongs to the universal ribosomal protein uL4 family. Part of the 50S ribosomal subunit.

Its function is as follows. One of the primary rRNA binding proteins, this protein initially binds near the 5'-end of the 23S rRNA. It is important during the early stages of 50S assembly. It makes multiple contacts with different domains of the 23S rRNA in the assembled 50S subunit and ribosome. Forms part of the polypeptide exit tunnel. The protein is Large ribosomal subunit protein uL4 of Sodalis glossinidius (strain morsitans).